A 267-amino-acid polypeptide reads, in one-letter code: Ribonuclease HII (267 aa).

One can recognise an RNase H type-2 domain in the interval 57-245; the sequence is WPVAGCDEVG…VVAARERHRA (189 aa). Aspartate 63, glutamate 64, and aspartate 154 together coordinate a divalent metal cation.

It belongs to the RNase HII family. Mn(2+) serves as cofactor. Requires Mg(2+) as cofactor.

It is found in the cytoplasm. It catalyses the reaction Endonucleolytic cleavage to 5'-phosphomonoester.. Its function is as follows. Endonuclease that specifically degrades the RNA of RNA-DNA hybrids. In Nitrobacter hamburgensis (strain DSM 10229 / NCIMB 13809 / X14), this protein is Ribonuclease HII.